Here is a 230-residue protein sequence, read N- to C-terminus: Cytidylate kinase (230 aa).

12–20 contacts ATP; the sequence is GPSGAGKGT.

The protein belongs to the cytidylate kinase family. Type 1 subfamily.

It localises to the cytoplasm. It carries out the reaction CMP + ATP = CDP + ADP. The catalysed reaction is dCMP + ATP = dCDP + ADP. The protein is Cytidylate kinase of Shewanella halifaxensis (strain HAW-EB4).